Reading from the N-terminus, the 104-residue chain is L-rhamnose mutarotase (104 aa).

Tyr-18 contacts substrate. His-22 (proton donor) is an active-site residue. Substrate contacts are provided by residues Tyr-41 and 76–77; that span reads WW.

Belongs to the rhamnose mutarotase family. Homodimer.

The protein resides in the cytoplasm. It catalyses the reaction alpha-L-rhamnose = beta-L-rhamnose. It functions in the pathway carbohydrate metabolism; L-rhamnose metabolism. Its function is as follows. Involved in the anomeric conversion of L-rhamnose. The protein is L-rhamnose mutarotase of Citrobacter koseri (strain ATCC BAA-895 / CDC 4225-83 / SGSC4696).